The chain runs to 139 residues: Transcription antitermination protein NusB (139 aa).

The protein belongs to the NusB family.

Functionally, involved in transcription antitermination. Required for transcription of ribosomal RNA (rRNA) genes. Binds specifically to the boxA antiterminator sequence of the ribosomal RNA (rrn) operons. The protein is Transcription antitermination protein NusB of Escherichia fergusonii (strain ATCC 35469 / DSM 13698 / CCUG 18766 / IAM 14443 / JCM 21226 / LMG 7866 / NBRC 102419 / NCTC 12128 / CDC 0568-73).